The sequence spans 47 residues: Short neurotoxin D2A (47 aa).

Intrachain disulfides connect C3–C24 and C17–C39.

Expressed by the venom gland.

The protein resides in the secreted. This is Short neurotoxin D2A from Micrurus pyrrhocryptus (Coral snake).